Consider the following 117-residue polypeptide: uncharacterized protein (117 aa).

The signal sequence occupies residues 1–23 (MVSEAEFMAALAKFAETSATASA).

This is an uncharacterized protein from Archaeoglobus fulgidus (strain ATCC 49558 / DSM 4304 / JCM 9628 / NBRC 100126 / VC-16).